The following is a 272-amino-acid chain: Streptomycin 3''-kinase (272 aa).

Residue Asp190 is the Proton acceptor of the active site.

This sequence belongs to the aminoglycoside phosphotransferase family.

It carries out the reaction streptomycin + ATP = streptomycin 3''-phosphate + ADP + H(+). Functionally, the aminoglycoside phosphotransferases achieve inactivation of their antibiotic substrates by phosphorylation. The polypeptide is Streptomycin 3''-kinase (aphE) (Streptomyces griseus).